We begin with the raw amino-acid sequence, 779 residues long: Endonuclease MutS2 (779 aa).

328–335 contacts ATP; that stretch reads GPNTGGKT. Positions 704–779 constitute a Smr domain; it reads LDLRGKRYEE…GSGATIVTLG (76 aa).

The protein belongs to the DNA mismatch repair MutS family. MutS2 subfamily. As to quaternary structure, homodimer. Binds to stalled ribosomes, contacting rRNA.

Its function is as follows. Endonuclease that is involved in the suppression of homologous recombination and thus may have a key role in the control of bacterial genetic diversity. In terms of biological role, acts as a ribosome collision sensor, splitting the ribosome into its 2 subunits. Detects stalled/collided 70S ribosomes which it binds and splits by an ATP-hydrolysis driven conformational change. Acts upstream of the ribosome quality control system (RQC), a ribosome-associated complex that mediates the extraction of incompletely synthesized nascent chains from stalled ribosomes and their subsequent degradation. Probably generates substrates for RQC. The protein is Endonuclease MutS2 of Streptococcus pyogenes serotype M49 (strain NZ131).